The sequence spans 418 residues: Pentatricopeptide repeat-containing protein At2g18520, mitochondrial (418 aa).

Residues 1-14 (MTSSRLYLRFLRRF) constitute a mitochondrion transit peptide. PPR repeat units lie at residues 101–135 (TETF…GTPR), 136–166 (TVVS…FPQR), 173–207 (DKIS…GVEV), 208–242 (TIIA…GCDL), 243–276 (DNTV…GLKP), 277–311 (DTVS…NAAT), 312–342 (FRTL…HKIP), and 343–373 (DFKT…VKKK).

It belongs to the PPR family. P subfamily.

Its subcellular location is the mitochondrion. The protein is Pentatricopeptide repeat-containing protein At2g18520, mitochondrial of Arabidopsis thaliana (Mouse-ear cress).